The primary structure comprises 483 residues: Glutamyl-tRNA(Gln) amidotransferase subunit A (483 aa).

Catalysis depends on charge relay system residues lysine 76 and serine 151. Residue serine 175 is the Acyl-ester intermediate of the active site.

This sequence belongs to the amidase family. GatA subfamily. Heterotrimer of A, B and C subunits.

The enzyme catalyses L-glutamyl-tRNA(Gln) + L-glutamine + ATP + H2O = L-glutaminyl-tRNA(Gln) + L-glutamate + ADP + phosphate + H(+). Its function is as follows. Allows the formation of correctly charged Gln-tRNA(Gln) through the transamidation of misacylated Glu-tRNA(Gln) in organisms which lack glutaminyl-tRNA synthetase. The reaction takes place in the presence of glutamine and ATP through an activated gamma-phospho-Glu-tRNA(Gln). This Chromobacterium violaceum (strain ATCC 12472 / DSM 30191 / JCM 1249 / CCUG 213 / NBRC 12614 / NCIMB 9131 / NCTC 9757 / MK) protein is Glutamyl-tRNA(Gln) amidotransferase subunit A.